Here is a 229-residue protein sequence, read N- to C-terminus: Potassium/proton antiporter CemA (229 aa).

3 consecutive transmembrane segments (helical) span residues phenylalanine 7–phenylalanine 27, methionine 106–tryptophan 126, and isoleucine 189–isoleucine 209.

The protein belongs to the CemA family.

It localises to the plastid membrane. The enzyme catalyses K(+)(in) + H(+)(out) = K(+)(out) + H(+)(in). Functionally, may be involved in proton extrusion. This is Potassium/proton antiporter CemA from Cuscuta reflexa (Southern Asian dodder).